Consider the following 632-residue polypeptide: Chaperone protein HtpG (632 aa).

An a; substrate-binding region spans residues methionine 1 to arginine 339. The b stretch occupies residues glutamate 340 to arginine 559. Residues methionine 560 to alanine 632 are c.

This sequence belongs to the heat shock protein 90 family. Homodimer.

The protein localises to the cytoplasm. Its function is as follows. Molecular chaperone. Has ATPase activity. In Burkholderia cenocepacia (strain HI2424), this protein is Chaperone protein HtpG.